Reading from the N-terminus, the 858-residue chain is Polyhomeotic-like protein 2 (858 aa).

Disordered stretches follow at residues 1–76 (MENE…QYLQ), 230–307 (QQTP…MEGR), 337–388 (PQPS…VALQ), 407–444 (LQCPTANLHKPGGSQQCHPPTPDTGPQNGHPEGVPHTP), 473–493 (KEVAPGEKSVPETRSGPSPHQ), and 529–561 (TDLSSPGMTSGNGNSASSIAGTAPQNGENKPPQ). Low complexity-rich tracts occupy residues 10 to 34 (TSSSACATSSTSGASSSSGCNNSSS) and 230 to 241 (QQTPAAAASGPT). An interaction with BMI1 region spans residues 33–53 (SSGGSGRPTGPQISVYSGIPD). Residues 265–274 (PAQSRNTAQA) are compositionally biased toward polar residues. A compositionally biased stretch (low complexity) spans 337–358 (PQPSSKHLQPQFVIQQQPQPQQ). A compositionally biased stretch (polar residues) spans 379-388 (ASVSPSVALQ). Over residues 473–483 (KEVAPGEKSVP) the composition is skewed to basic and acidic residues. The segment covering 537-551 (TSGNGNSASSIAGTA) has biased composition (low complexity). The short motif at 558–587 (KPPQAIVKPQILTHVIEGFVIQEGAEPFPV) is the HD1 element. Residues Lys-598 and Lys-600 each participate in a glycyl lysine isopeptide (Lys-Gly) (interchain with G-Cter in SUMO2) cross-link. Thr-619 carries the post-translational modification Phosphothreonine. Ser-621 bears the Phosphoserine mark. A Glycyl lysine isopeptide (Lys-Gly) (interchain with G-Cter in SUMO2) cross-link involves residue Lys-632. An FCS-type zinc finger spans residues 633–667 (EEGAPLKLKCELCGRVDFAYKFKRSKRFCSMACAK). Zn(2+) contacts are provided by Cys-642, Cys-645, Cys-661, and Cys-665. 2 disordered regions span residues 688–720 (QKAGAATHNRRRASKASLPPLTKDTKKQPTGTV) and 732–768 (HSQEDSSRCSDNSSYEEPLSPISASSSTSRRRQGQRD). Residue Lys-702 forms a Glycyl lysine isopeptide (Lys-Gly) (interchain with G-Cter in SUMO2) linkage. Phosphoserine is present on Ser-751. The region spanning 794–858 (WNVEDVYEFI…YARISMLKDS (65 aa)) is the SAM domain. A Glycyl lysine isopeptide (Lys-Gly) (interchain with G-Cter in SUMO2) cross-link involves residue Lys-847.

As to quaternary structure, component of a PRC1-like complex. Interacts with CBX4. Interacts with BMI1, PCGF2, PHC1 and RNF2. Interacts with CHTOP. Interacts with the N-terminal region of the SP1 transcription factor and with MAPKAPK2. Interacts with SAMD7 and SAMD11.

It localises to the nucleus. Its function is as follows. Component of a Polycomb group (PcG) multiprotein PRC1-like complex, a complex class required to maintain the transcriptionally repressive state of many genes, including Hox genes, throughout development. PcG PRC1 complex acts via chromatin remodeling and modification of histones; it mediates monoubiquitination of histone H2A 'Lys-119', rendering chromatin heritably changed in its expressibility. This chain is Polyhomeotic-like protein 2 (PHC2), found in Homo sapiens (Human).